A 452-amino-acid polypeptide reads, in one-letter code: Pup--protein ligase (452 aa).

Residue E9 coordinates Mg(2+). R53 lines the ATP pocket. Residue Y55 coordinates Mg(2+). Catalysis depends on D57, which acts as the Proton acceptor. Position 63 (E63) interacts with Mg(2+). 2 residues coordinate ATP: T66 and W419.

Belongs to the Pup ligase/Pup deamidase family. Pup-conjugating enzyme subfamily.

The catalysed reaction is ATP + [prokaryotic ubiquitin-like protein]-L-glutamate + [protein]-L-lysine = ADP + phosphate + N(6)-([prokaryotic ubiquitin-like protein]-gamma-L-glutamyl)-[protein]-L-lysine.. It participates in protein degradation; proteasomal Pup-dependent pathway. It functions in the pathway protein modification; protein pupylation. Catalyzes the covalent attachment of the prokaryotic ubiquitin-like protein modifier Pup to the proteasomal substrate proteins, thereby targeting them for proteasomal degradation. This tagging system is termed pupylation. The ligation reaction involves the side-chain carboxylate of the C-terminal glutamate of Pup and the side-chain amino group of a substrate lysine. In Geodermatophilus obscurus (strain ATCC 25078 / DSM 43160 / JCM 3152 / CCUG 61914 / KCC A-0152 / KCTC 9177 / NBRC 13315 / NRRL B-3577 / G-20), this protein is Pup--protein ligase.